The primary structure comprises 476 residues: MAEGKSGAGLFAKQVQKHFSRAQEKVLQKLGKTVETKDEQFEQSAYNFQLQQNEGNKLYKDLKAFVGAVKVMHESSRKVAETLQEIYSTEWDGHVELKAIADSNDLLWDDYEAKLGDQALRLMENYLAQFGDIKERIAKRGRKLVDYDSARHHLEALQNAKKKDEAKIAKAEEEFNRAQVVFEELNRELREELPVLYGSRIACYVTIFQNISNLRDIFYKEMSKLNRDLYEVMGKLDKQHSSKVFIIKGVPSKRRSLLISAPVSPPAAYPCPGKAPNWEPSSGAEQTPTSPRVGSDATEDVPNGLAAPGPAEPGAPMPGPPPASPTSVRSASESESECSGESREIDLSPKEMEVSAGSGCPEYPKTEGAAKGEVEGIAASMASMIVSEAIAAATGAAPGDSDGVGGGDSTDSEISPAEGAWGGPSPGGSEERVEGTDVSPEVGSDAGPCEHGTPEPPEQDVSCNPPQDPSESLTPL.

In terms of domain architecture, BAR spans 26–242; that stretch reads VLQKLGKTVE…MGKLDKQHSS (217 aa). Disordered stretches follow at residues 269-369 and 395-476; these read YPCP…TEGA and GAAP…LTPL. Residues 279–292 are compositionally biased toward polar residues; the sequence is EPSSGAEQTPTSPR. Over residues 310–324 the composition is skewed to pro residues; that stretch reads PAEPGAPMPGPPPAS. Positions 325 to 339 are enriched in low complexity; sequence PTSVRSASESESECS. Residues 340–353 show a composition bias toward basic and acidic residues; that stretch reads GESREIDLSPKEME. Residues 461 to 476 show a composition bias toward polar residues; the sequence is VSCNPPQDPSESLTPL.

The protein resides in the cytoplasm. The chain is Bridging integrator 2 (BIN2) from Gallus gallus (Chicken).